The primary structure comprises 382 residues: tRNA(Met) cytidine acetate ligase (382 aa).

ATP-binding positions include V9–Q22, G103, N152, and R177.

It belongs to the TmcAL family.

It localises to the cytoplasm. The enzyme catalyses cytidine(34) in elongator tRNA(Met) + acetate + ATP = N(4)-acetylcytidine(34) in elongator tRNA(Met) + AMP + diphosphate. Catalyzes the formation of N(4)-acetylcytidine (ac(4)C) at the wobble position of elongator tRNA(Met), using acetate and ATP as substrates. First activates an acetate ion to form acetyladenylate (Ac-AMP) and then transfers the acetyl group to tRNA to form ac(4)C34. This is tRNA(Met) cytidine acetate ligase from Levilactobacillus brevis (strain ATCC 367 / BCRC 12310 / CIP 105137 / JCM 1170 / LMG 11437 / NCIMB 947 / NCTC 947) (Lactobacillus brevis).